The sequence spans 388 residues: Chaperone protein DnaJ (388 aa).

Positions 4–69 (DYYDILGVDE…EKRQRYDQFG (66 aa)) constitute a J domain. Composition is skewed to basic and acidic residues over residues 27–50 (KAMEYHPDRNPDDPEAEQKFKEAS), 58–73 (DPEKRQRYDQFGHDGV), and 113–124 (GRSERGRGRPGS). 2 disordered regions span residues 27–86 (KAME…GRGR) and 99–125 (SDIFGGAPGGGRGRGRSERGRGRPGSD). The CR-type zinc-finger motif lies at 140–225 (GTEKNLRLQK…CGGEGRVQGE (86 aa)). Zn(2+)-binding residues include Cys153, Cys156, Cys173, Cys176, Cys199, Cys202, Cys213, and Cys216. CXXCXGXG motif repeat units lie at residues 153 to 160 (CESCDGTG), 173 to 180 (CPKCDGTG), 199 to 206 (CPRCEGEG), and 213 to 220 (CDDCGGEG). Residues 362–376 (AHDNFQPRPPEEDTQ) show a composition bias toward basic and acidic residues. Residues 362–388 (AHDNFQPRPPEEDTQKSFFRRVSDVFS) form a disordered region.

Belongs to the DnaJ family. Homodimer. Zn(2+) serves as cofactor.

It is found in the cytoplasm. In terms of biological role, participates actively in the response to hyperosmotic and heat shock by preventing the aggregation of stress-denatured proteins and by disaggregating proteins, also in an autonomous, DnaK-independent fashion. Unfolded proteins bind initially to DnaJ; upon interaction with the DnaJ-bound protein, DnaK hydrolyzes its bound ATP, resulting in the formation of a stable complex. GrpE releases ADP from DnaK; ATP binding to DnaK triggers the release of the substrate protein, thus completing the reaction cycle. Several rounds of ATP-dependent interactions between DnaJ, DnaK and GrpE are required for fully efficient folding. Also involved, together with DnaK and GrpE, in the DNA replication of plasmids through activation of initiation proteins. This is Chaperone protein DnaJ from Salinibacter ruber (strain DSM 13855 / M31).